The sequence spans 210 residues: Ribonuclease HII (210 aa).

The RNase H type-2 domain occupies 18–210 (GLIAGVDEVG…FKPVKALLGL (193 aa)). A divalent metal cation contacts are provided by D24, E25, and D116.

The protein belongs to the RNase HII family. The cofactor is Mn(2+). Mg(2+) is required as a cofactor.

It localises to the cytoplasm. It carries out the reaction Endonucleolytic cleavage to 5'-phosphomonoester.. Endonuclease that specifically degrades the RNA of RNA-DNA hybrids. The chain is Ribonuclease HII from Shewanella baltica (strain OS223).